We begin with the raw amino-acid sequence, 871 residues long: Alanine--tRNA ligase (871 aa).

Zn(2+) contacts are provided by H561, H565, C665, and H669.

Belongs to the class-II aminoacyl-tRNA synthetase family. It depends on Zn(2+) as a cofactor.

It localises to the cytoplasm. It catalyses the reaction tRNA(Ala) + L-alanine + ATP = L-alanyl-tRNA(Ala) + AMP + diphosphate. Catalyzes the attachment of alanine to tRNA(Ala) in a two-step reaction: alanine is first activated by ATP to form Ala-AMP and then transferred to the acceptor end of tRNA(Ala). Also edits incorrectly charged Ser-tRNA(Ala) and Gly-tRNA(Ala) via its editing domain. This is Alanine--tRNA ligase from Dehalococcoides mccartyi (strain CBDB1).